A 335-amino-acid chain; its full sequence is Anthranilate phosphoribosyltransferase (335 aa).

Residues G82, 85-86 (GD), T90, 92-95 (NIST), 110-118 (KHGGRSVSS), and S122 contribute to the 5-phospho-alpha-D-ribose 1-diphosphate site. Anthranilate is bound at residue G82. S94 serves as a coordination point for Mg(2+). R168 provides a ligand contact to anthranilate. Residues D226 and E227 each contribute to the Mg(2+) site.

The protein belongs to the anthranilate phosphoribosyltransferase family. Homodimer. Requires Mg(2+) as cofactor.

It carries out the reaction N-(5-phospho-beta-D-ribosyl)anthranilate + diphosphate = 5-phospho-alpha-D-ribose 1-diphosphate + anthranilate. Its pathway is amino-acid biosynthesis; L-tryptophan biosynthesis; L-tryptophan from chorismate: step 2/5. Functionally, catalyzes the transfer of the phosphoribosyl group of 5-phosphorylribose-1-pyrophosphate (PRPP) to anthranilate to yield N-(5'-phosphoribosyl)-anthranilate (PRA). This Francisella philomiragia subsp. philomiragia (strain ATCC 25017 / CCUG 19701 / FSC 153 / O#319-036) protein is Anthranilate phosphoribosyltransferase.